Here is a 276-residue protein sequence, read N- to C-terminus: uncharacterized protein (276 aa).

15–22 provides a ligand contact to ATP; sequence GKGGVGKS. 4Fe-4S ferredoxin-type domains follow at residues 68-96 and 92-121; these read EIYEINDDCIRCGKCLDVCQFDAIGDFKI and GDFKINPILCEGCGACELICEFDAIEPIKR. [4Fe-4S] cluster contacts are provided by Cys76, Cys79, Cys82, Cys86, Cys101, Cys104, Cys107, and Cys111.

This is an uncharacterized protein from Methanocaldococcus jannaschii (strain ATCC 43067 / DSM 2661 / JAL-1 / JCM 10045 / NBRC 100440) (Methanococcus jannaschii).